The chain runs to 318 residues: Transaldolase (318 aa).

K132 functions as the Schiff-base intermediate with substrate in the catalytic mechanism.

This sequence belongs to the transaldolase family. Type 1 subfamily. Homodimer.

It localises to the cytoplasm. It carries out the reaction D-sedoheptulose 7-phosphate + D-glyceraldehyde 3-phosphate = D-erythrose 4-phosphate + beta-D-fructose 6-phosphate. It participates in carbohydrate degradation; pentose phosphate pathway; D-glyceraldehyde 3-phosphate and beta-D-fructose 6-phosphate from D-ribose 5-phosphate and D-xylulose 5-phosphate (non-oxidative stage): step 2/3. In terms of biological role, transaldolase is important for the balance of metabolites in the pentose-phosphate pathway. The protein is Transaldolase of Shewanella baltica (strain OS195).